We begin with the raw amino-acid sequence, 312 residues long: TATA box-binding protein-like 2 (312 aa).

A disordered region spans residues 65 to 115 (DELSTQDEPSQVEKESKNEDSGIYTDCPQKESTQADIDTSNSAQNTSQFNL). Over residues 75-84 (QVEKESKNED) the composition is skewed to basic and acidic residues. Polar residues predominate over residues 94–115 (KESTQADIDTSNSAQNTSQFNL).

This sequence belongs to the TBP family. In terms of tissue distribution, in adults, expressed in the gonads, with expression much higher in the ovary than the testis (at protein level). Shows a small amount of expression in other adult organs, including the brain and kidney. Embryonic expression is mostly ubiquitous except in early gastrula embryos where expression is asymmetric.

The protein resides in the nucleus. In terms of biological role, TATA box-binding transcription factor. Members of the TBP family are differentially required to regulate transcription and development during early embryogenesis. Commits mesoderm to the hematopoietic lineage during hemopoiesis, acting via mespa. Binds to the mespa promoter. This chain is TATA box-binding protein-like 2, found in Danio rerio (Zebrafish).